Reading from the N-terminus, the 168-residue chain is Cyclic pyranopterin monophosphate synthase (168 aa).

Residues 83–85 and 121–122 contribute to the substrate site; these read LCH and ME. Asp-136 is an active-site residue.

The protein belongs to the MoaC family. In terms of assembly, homohexamer; trimer of dimers.

The catalysed reaction is (8S)-3',8-cyclo-7,8-dihydroguanosine 5'-triphosphate = cyclic pyranopterin phosphate + diphosphate. Its pathway is cofactor biosynthesis; molybdopterin biosynthesis. Its function is as follows. Catalyzes the conversion of (8S)-3',8-cyclo-7,8-dihydroguanosine 5'-triphosphate to cyclic pyranopterin monophosphate (cPMP). The sequence is that of Cyclic pyranopterin monophosphate synthase from Nostoc sp. (strain PCC 7120 / SAG 25.82 / UTEX 2576).